The chain runs to 660 residues: Bifunctional polymyxin resistance protein ArnA (660 aa).

Positions 1-304 are formyltransferase ArnAFT; it reads MKAIVFAYHD…DMSMVTDVRV (304 aa). Histidine 104 serves as the catalytic Proton donor; for formyltransferase activity. Residues arginine 114 and 136 to 140 contribute to the (6R)-10-formyltetrahydrofolate site; that span reads VLKPD. Residues 314 to 660 are dehydrogenase ArnADH; sequence HRKRVLILGV…RGAVEELGKN (347 aa). Residues aspartate 347 and 368 to 369 each bind NAD(+); that span reads DI. Residues alanine 393, tyrosine 398, and 432–433 contribute to the UDP-alpha-D-glucuronate site; that span reads TS. The active-site Proton acceptor; for decarboxylase activity is the glutamate 434. UDP-alpha-D-glucuronate contacts are provided by residues arginine 460, asparagine 492, 526–535, and tyrosine 613; that span reads KLVDGGEQKR. The Proton donor; for decarboxylase activity role is filled by arginine 619.

In the N-terminal section; belongs to the Fmt family. UDP-L-Ara4N formyltransferase subfamily. It in the C-terminal section; belongs to the NAD(P)-dependent epimerase/dehydratase family. UDP-glucuronic acid decarboxylase subfamily. Homohexamer, formed by a dimer of trimers.

The enzyme catalyses UDP-alpha-D-glucuronate + NAD(+) = UDP-beta-L-threo-pentopyranos-4-ulose + CO2 + NADH. It catalyses the reaction UDP-4-amino-4-deoxy-beta-L-arabinose + (6R)-10-formyltetrahydrofolate = UDP-4-deoxy-4-formamido-beta-L-arabinose + (6S)-5,6,7,8-tetrahydrofolate + H(+). The protein operates within nucleotide-sugar biosynthesis; UDP-4-deoxy-4-formamido-beta-L-arabinose biosynthesis; UDP-4-deoxy-4-formamido-beta-L-arabinose from UDP-alpha-D-glucuronate: step 1/3. It functions in the pathway nucleotide-sugar biosynthesis; UDP-4-deoxy-4-formamido-beta-L-arabinose biosynthesis; UDP-4-deoxy-4-formamido-beta-L-arabinose from UDP-alpha-D-glucuronate: step 3/3. Its pathway is bacterial outer membrane biogenesis; lipopolysaccharide biosynthesis. Functionally, bifunctional enzyme that catalyzes the oxidative decarboxylation of UDP-glucuronic acid (UDP-GlcUA) to UDP-4-keto-arabinose (UDP-Ara4O) and the addition of a formyl group to UDP-4-amino-4-deoxy-L-arabinose (UDP-L-Ara4N) to form UDP-L-4-formamido-arabinose (UDP-L-Ara4FN). The modified arabinose is attached to lipid A and is required for resistance to polymyxin and cationic antimicrobial peptides. The protein is Bifunctional polymyxin resistance protein ArnA of Photorhabdus laumondii subsp. laumondii (strain DSM 15139 / CIP 105565 / TT01) (Photorhabdus luminescens subsp. laumondii).